The following is a 107-amino-acid chain: Precursor of CEP14 (107 aa).

A signal peptide spans 1-21 (MAVRLIPTIWLFIVFAVIVSA). The propeptide occupies 22-92 (LPSLVSSRKL…GKLRSRHLST (71 aa)). A glycan (N-linked (GlcNAc...) asparagine) is linked at Asn39. The tract at residues 43-76 (REEEKSHMPHVTKTSTLSALPKGKIPNSTPSKKG) is disordered. 2 positions are modified to hydroxyproline: Pro101 and Pro103.

This sequence belongs to the C-terminally encoded plant signaling peptide (CEP) family. As to quaternary structure, interacts with CEP receptors (e.g. CEPR1 and CEPR2). In terms of processing, the mature small signaling peptide is generated by proteolytic processing of the longer precursor.

The protein localises to the secreted. It localises to the extracellular space. It is found in the apoplast. Extracellular signaling peptide that may regulate primary root growth rate and systemic nitrogen (N)-demand signaling. This is Precursor of CEP14 from Arabidopsis thaliana (Mouse-ear cress).